We begin with the raw amino-acid sequence, 219 residues long: Uracil-DNA glycosylase (219 aa).

Catalysis depends on Asp-61, which acts as the Proton acceptor.

The protein belongs to the uracil-DNA glycosylase (UDG) superfamily. UNG family.

The protein resides in the cytoplasm. The enzyme catalyses Hydrolyzes single-stranded DNA or mismatched double-stranded DNA and polynucleotides, releasing free uracil.. In terms of biological role, excises uracil residues from the DNA which can arise as a result of misincorporation of dUMP residues by DNA polymerase or due to deamination of cytosine. The chain is Uracil-DNA glycosylase from Neisseria meningitidis serogroup C (strain 053442).